Reading from the N-terminus, the 141-residue chain is U-scoloptoxin(17)-Er3a (141 aa).

Positions 1 to 21 (MKSTFALVFGILMVIAHLSFA) are cleaved as a signal peptide.

It belongs to the scoloptoxin-17 family. Post-translationally, contains 3 disulfide bonds. Expressed by the venom gland.

It localises to the secreted. This is U-scoloptoxin(17)-Er3a from Ethmostigmus rubripes (Giant centipede).